Reading from the N-terminus, the 377-residue chain is Probable tRNA pseudouridine synthase D (377 aa).

Aspartate 89 (nucleophile) is an active-site residue. The 218-residue stretch at 160–377 folds into the TRUD domain; that stretch reads YLPAFIGYQR…ILRGDPRKFT (218 aa).

This sequence belongs to the pseudouridine synthase TruD family.

The enzyme catalyses uridine(13) in tRNA = pseudouridine(13) in tRNA. In terms of biological role, could be responsible for synthesis of pseudouridine from uracil-13 in transfer RNAs. This is Probable tRNA pseudouridine synthase D from Saccharolobus solfataricus (strain ATCC 35092 / DSM 1617 / JCM 11322 / P2) (Sulfolobus solfataricus).